A 175-amino-acid polypeptide reads, in one-letter code: MGRTLESKQQIVEELKQLLGEAEMALVLDYQGLSIKEMSDLRTRLQAANGVCKVTKNTLMRRAIDGDSAWSNLDSLLTGTNAFVLVKGDVGGAVKAVQAFQKDTKKSETKGGLFEGKLLSQDEIKAIGDLPSKEALMAQIAGAINAVATKVAVGINEVPSGLARALKQHAESGEG.

This sequence belongs to the universal ribosomal protein uL10 family. Part of the ribosomal stalk of the 50S ribosomal subunit. The N-terminus interacts with L11 and the large rRNA to form the base of the stalk. The C-terminus forms an elongated spine to which L12 dimers bind in a sequential fashion forming a multimeric L10(L12)X complex.

Functionally, forms part of the ribosomal stalk, playing a central role in the interaction of the ribosome with GTP-bound translation factors. The protein is Large ribosomal subunit protein uL10 of Synechococcus sp. (strain WH7803).